Here is a 459-residue protein sequence, read N- to C-terminus: Argininosuccinate lyase (459 aa).

This sequence belongs to the lyase 1 family. Argininosuccinate lyase subfamily.

It localises to the cytoplasm. It catalyses the reaction 2-(N(omega)-L-arginino)succinate = fumarate + L-arginine. The protein operates within amino-acid biosynthesis; L-arginine biosynthesis; L-arginine from L-ornithine and carbamoyl phosphate: step 3/3. In Methylobacterium radiotolerans (strain ATCC 27329 / DSM 1819 / JCM 2831 / NBRC 15690 / NCIMB 10815 / 0-1), this protein is Argininosuccinate lyase.